The sequence spans 425 residues: UDP-N-acetylglucosamine 1-carboxyvinyltransferase (425 aa).

Residue K22–N23 coordinates phosphoenolpyruvate. R98 contacts UDP-N-acetyl-alpha-D-glucosamine. The Proton donor role is filled by C122. C122 bears the 2-(S-cysteinyl)pyruvic acid O-phosphothioketal mark. UDP-N-acetyl-alpha-D-glucosamine is bound by residues R127–Q131, D313, and I335.

Belongs to the EPSP synthase family. MurA subfamily.

It is found in the cytoplasm. The catalysed reaction is phosphoenolpyruvate + UDP-N-acetyl-alpha-D-glucosamine = UDP-N-acetyl-3-O-(1-carboxyvinyl)-alpha-D-glucosamine + phosphate. Its pathway is cell wall biogenesis; peptidoglycan biosynthesis. Functionally, cell wall formation. Adds enolpyruvyl to UDP-N-acetylglucosamine. This chain is UDP-N-acetylglucosamine 1-carboxyvinyltransferase, found in Xylella fastidiosa (strain 9a5c).